Reading from the N-terminus, the 284-residue chain is MLQRVSRRFPSLRRCGLRTASTVPTNQAQPGEVEEEVSATVKRIRSELAADKQKLKWRTPIGDRPEDWNSKLKLFSNAEQTSDFIVMMQKPIDLSPRNIRQWWENREERIERHMQQFVPERHKILGAELAAAHFILYRGGAVKFINDTHWRRASKDGEFKLPNKFDPRYKVEALRCDNMELYYEGLENLRCLDSLKFLSFHNVKSFDDWCLDRISGGGFPNLEVLDLSCTQITSNGLACLYRFPKLKLLILNDPKETLELELSTVMLEEAMPALKIVGADAIHS.

The protein belongs to the ATP synthase subunit s family. Associates with mitochondrial complex I assembly intermediates during its biogenesis.

Involved in the assembly of the mitochondrial membrane respiratory chain NADH dehydrogenase (Complex I). This chain is Distal membrane arm assembly component 2, found in Drosophila melanogaster (Fruit fly).